Reading from the N-terminus, the 206-residue chain is Large ribosomal subunit protein mL62 (206 aa).

A mitochondrion-targeting transit peptide spans 1–29 (MATAWGLRWGLSRTGTLLLAPPARCARRA). Glutamine 90 is modified (N5-methylglutamine).

It belongs to the prokaryotic/mitochondrial release factor family. Mitochondrion-specific ribosomal protein mL62 subfamily. As to quaternary structure, component of the mitochondrial ribosome large subunit (39S) which comprises a 16S rRNA and about 50 distinct proteins. Methylation of glutamine in the GGQ triplet by HEMK1.

The protein resides in the mitochondrion. The enzyme catalyses an N-acyl-L-alpha-aminoacyl-tRNA + H2O = an N-acyl-L-amino acid + a tRNA + H(+). Functionally, essential peptidyl-tRNA hydrolase component of the mitochondrial large ribosomal subunit. Acts as a codon-independent translation release factor that has lost all stop codon specificity and directs the termination of translation in mitochondrion, possibly in case of abortive elongation. May be involved in the hydrolysis of peptidyl-tRNAs that have been prematurely terminated and thus in the recycling of stalled mitochondrial ribosomes. In Mus musculus (Mouse), this protein is Large ribosomal subunit protein mL62.